The sequence spans 364 residues: Poly(3-hydroxyalkanoate) polymerase subunit PhaE (364 aa).

The tract at residues Ser322–Asp364 is disordered. The span at Lys324–Lys338 shows a compositional bias: low complexity.

The protein belongs to the PHA/PHB synthase family. Type III PhaE subfamily. Forms a heterodimer with PhaC, which may multimerize in the presence of 3-hydroxybutyryl-CoA.

It is found in the cytoplasm. The protein operates within biopolymer metabolism; poly-(R)-3-hydroxybutanoate biosynthesis. In terms of biological role, polymerizes D(-)-3-hydroxybutyryl-CoA to create polyhydroxybutyrate (PHB) which consists of thousands of hydroxybutyrate molecules linked end to end. This subunit has no catalytic activity but enhances the activity of PhaC, the catalytic subunit. The polypeptide is Poly(3-hydroxyalkanoate) polymerase subunit PhaE (Thiocystis violacea).